Reading from the N-terminus, the 947-residue chain is Pyruvate, phosphate dikinase 1, chloroplastic (947 aa).

Residues 1–71 constitute a chloroplast transit peptide; the sequence is MPSVSRAVCV…PLRAVAAPIP (71 aa). Residues 39–60 form a disordered region; it reads RHGKPEVAIRSGSGGSARGGHC. Residue threonine 527 is modified to Phosphothreonine; by PDRP1. The active-site Tele-phosphohistidine intermediate is the histidine 529. Substrate contacts are provided by arginine 635, arginine 692, glutamate 821, glycine 842, threonine 843, asparagine 844, and aspartate 845. Glutamate 821 provides a ligand contact to Mg(2+). Aspartate 845 contributes to the Mg(2+) binding site. Residue cysteine 907 is the Proton donor of the active site.

It belongs to the PEP-utilizing enzyme family. In terms of assembly, homotetramer. Requires Mg(2+) as cofactor. Phosphorylation of Thr-527 in the dark inactivates the enzyme. Dephosphorylation upon light stimulation reactivates the enzyme. Phosphorylation increases during the first 20 days post-pollination and then remains constant through the 40-day mature seed stage. Reactivation by dephosphorylation during germination is negligible. In terms of tissue distribution, isoform 1 is only expressed in green leaves. Isoform 2 is found in roots, stems, rachis branches, leaf sheaths, green leaves and spikelets. The non-phosphorylated PPDK in mature seeds is endosperm-localized.

It is found in the plastid. Its subcellular location is the chloroplast. It localises to the cytoplasm. The catalysed reaction is pyruvate + phosphate + ATP = phosphoenolpyruvate + AMP + diphosphate + H(+). Its activity is regulated as follows. Activated by light-induced dephosphorylation. Inhibited by dark-induced phosphorylation. Both reactions are catalyzed by PDRP1. Functionally, formation of phosphoenolpyruvate. The cytoplasmic isoform supports the biosynthetic processes in the nascent endosperm and provides an efficient mechanism for glycolytic ATP synthesis in oxygen depleted tissues. May be involved in regulating the flux of carbon into starch and fatty acids of seeds and in the remobilization of nitrogen reserves in senescing leaves. The chain is Pyruvate, phosphate dikinase 1, chloroplastic (PPDK1) from Oryza sativa subsp. japonica (Rice).